A 381-amino-acid chain; its full sequence is GDP-mannose-dependent alpha-(1-6)-phosphatidylinositol dimannoside mannosyltransferase (381 aa).

Substrate contacts are provided by residues glycine 16, arginine 207, 211-212 (EK), 283-287 (ETFGL), and glutamate 291.

It belongs to the glycosyltransferase group 1 family. Glycosyltransferase 4 subfamily.

It participates in phospholipid metabolism; phosphatidylinositol metabolism. Catalyzes the addition of a mannose residue from GDP-D-mannose to the position 6 of the alpha-1,6-linked mannose residue of the triacyl phosphatidylinositol dimannoside (Ac3PIM2) to generate triacyl phosphatidylinositol trimannoside (Ac3PIM3). This chain is GDP-mannose-dependent alpha-(1-6)-phosphatidylinositol dimannoside mannosyltransferase (pimC), found in Mycobacterium tuberculosis (strain ATCC 25177 / H37Ra).